Here is a 115-residue protein sequence, read N- to C-terminus: U3-lycotoxin-Ls1k (115 aa).

A signal peptide spans 1-20 (MKFVLLFGVLLVALFSYSSA). Positions 21–44 (EMLDDFGQADEDELLSLIEKEEAR) are excised as a propeptide. 4 disulfides stabilise this stretch: Cys-48-Cys-63, Cys-55-Cys-72, Cys-62-Cys-87, and Cys-74-Cys-85.

It belongs to the neurotoxin 19 (CSTX) family. 01 subfamily. As to expression, expressed by the venom gland.

It is found in the secreted. This Lycosa singoriensis (Wolf spider) protein is U3-lycotoxin-Ls1k.